The following is a 1231-amino-acid chain: MRLLAKIICLMLWAICVAEDCNELPPRRNTEILTGSWSDQTYPEGTQAIYKCRPGYRSLGNVIMVCRKGEWVALNPLRKCQKRPCGHPGDTPFGTFTLTGGNVFEYGVKAVYTCNEGYQLLGEINYRECDTDGWTNDIPICEVVKCLPVTAPENGKIVSSAMEPDREYHFGQAVRFVCNSGYKIEGDEEMHCSDDGFWSKEKPKCVEISCKSPDVINGSPISQKIIYKENERFQYKCNMGYEYSERGDAVCTESGWRPLPSCEEKSCDNPYIPNGDYSPLRIKHRTGDEITYQCRNGFYPATRGNTAKCTSTGWIPAPRCTLKPCDYPDIKHGGLYHENMRRPYFPVAVGKYYSYYCDEHFETPSGSYWDHIHCTQDGWSPAVPCLRKCYFPYLENGYNQNYGRKFVQGKSIDVACHPGYALPKAQTTVTCMENGWSPTPRCIRVKTCSKSSIDIENGFISESQYTYALKEKAKYQCKLGYVTADGETSGSITCGKDGWSAQPTCIKSCDIPVFMNARTKNDFTWFKLNDTLDYECHDGYESNTGSTTGSIVCGYNGWSDLPICYERECELPKIDVHLVPDRKKDQYKVGEVLKFSCKPGFTIVGPNSVQCYHFGLSPDLPICKEQVQSCGPPPELLNGNVKEKTKEEYGHSEVVEYYCNPRFLMKGPNKIQCVDGEWTTLPVCIVEESTCGDIPELEHGWAQLSSPPYYYGDSVEFNCSESFTMIGHRSITCIHGVWTQLPQCVAIDKLKKCKSSNLIILEEHLKNKKEFDHNSNIRYRCRGKEGWIHTVCINGRWDPEVNCSMAQIQLCPPPPQIPNSHNMTTTLNYRDGEKVSVLCQENYLIQEGEEITCKDGRWQSIPLCVEKIPCSQPPQIEHGTINSSRSSQESYAHGTKLSYTCEGGFRISEENETTCYMGKWSSPPQCEGLPCKSPPEISHGVVAHMSDSYQYGEEVTYKCFEGFGIDGPAIAKCLGEKWSHPPSCIKTDCLSLPSFENAIPMGEKKDVYKAGEQVTYTCATYYKMDGASNVTCINSRWTGRPTCRDTSCVNPPTVQNAYIVSRQMSKYPSGERVRYQCRSPYEMFGDEEVMCLNGNWTEPPQCKDSTGKCGPPPPIDNGDITSFPLSVYAPASSVEYQCQNLYQLEGNKRITCRNGQWSEPPKCLHPCVISREIMENYNIALRWTAKQKLYSRTGESVEFVCKRGYRLSSRSHTLRTTCWDGKLEYPTCAKR.

Positions 1–18 are cleaved as a signal peptide; sequence MRLLAKIICLMLWAICVA. 20 Sushi domains span residues 19-82, 83-143, 144-207, 208-264, 265-322, 324-386, 387-444, 446-507, 515-566, 567-625, 628-686, 689-746, 751-805, 809-866, 868-928, 929-986, 987-1045, 1046-1104, 1107-1165, and 1170-1230; these read EDCN…KCQK, RPCG…ICEV, VKCL…KCVE, ISCK…SCEE, KSCD…RCTL, PCDY…VPCL, RKCY…RCIR, KTCS…TCIK, MNAR…ICYE, RECE…ICKE, QSCG…VCIV, STCG…QCVA, KKCK…NCSM, QLCP…LCVE, IPCS…QCEG, LPCK…SCIK, TDCL…TCRD, TSCV…QCKD, GKCG…KCLH, and SREI…TCAK. 40 disulfide bridges follow: Cys-21–Cys-66, Cys-52–Cys-80, Cys-85–Cys-129, Cys-114–Cys-141, Cys-146–Cys-192, Cys-178–Cys-205, Cys-210–Cys-251, Cys-237–Cys-262, Cys-267–Cys-309, Cys-294–Cys-320, Cys-325–Cys-374, Cys-357–Cys-385, Cys-389–Cys-431, Cys-416–Cys-442, Cys-448–Cys-494, Cys-477–Cys-505, Cys-509–Cys-553, Cys-536–Cys-564, Cys-569–Cys-611, Cys-597–Cys-623, Cys-630–Cys-673, Cys-659–Cys-684, Cys-691–Cys-733, Cys-719–Cys-744, Cys-753–Cys-792, Cys-781–Cys-803, Cys-811–Cys-853, Cys-839–Cys-864, Cys-870–Cys-915, Cys-901–Cys-926, Cys-931–Cys-973, Cys-959–Cys-984, Cys-989–Cys-1032, Cys-1018–Cys-1043, Cys-1048–Cys-1091, Cys-1077–Cys-1102, Cys-1109–Cys-1152, Cys-1138–Cys-1163, Cys-1167–Cys-1218, and Cys-1201–Cys-1228. An N-linked (GlcNAc...) (complex) asparagine glycan is attached at Asn-217. An N-linked (GlcNAc...) asparagine glycan is attached at Asn-529. Asn-718 is a glycosylation site (N-linked (GlcNAc...) asparagine). Residues Asn-802 and Asn-822 are each glycosylated (N-linked (GlcNAc...) asparagine). 2 N-linked (GlcNAc...) (complex) asparagine glycosylation sites follow: Asn-882 and Asn-911. An N-linked (GlcNAc...) (complex) asparagine glycan is attached at Asn-1029. Residue Asn-1095 is glycosylated (N-linked (GlcNAc...) asparagine).

In terms of assembly, homodimer. Also forms homooligomers. Interacts with complement protein C3b; this interaction inhibits complement activation. Interacts with complement protein C3d. Interacts with CR3/ITGAM; this interaction mediates adhesion of neutrophils to pathogens leading to pathogen clearance. Interacts with complement factor I. (Microbial infection) Interacts with West nile virus non-structural protein 1 (NS1); this interaction leads to the degradation of C3. As to quaternary structure, (Microbial infection) Interacts with C.albicans GPD2; the interaction is direct and leads to the degradation of C3 which enables the pathogen to evade the host innate immune system. In terms of assembly, (Microbial infection) Interacts with Neisseria meningitidis protein fHbp. (Microbial infection) Interacts with Borrelia burgdorferi outer surface protein E/OspE; this interaction recruits complement regulator factor H onto the bacterial surface to evade complement-mediated cell lysis. As to quaternary structure, (Microbial infection) Interacts with Streptococcus pneumoniae protein virulence factor choline-binding protein A/CbpAN; this interaction enables Streptococcus pneumoniae to evade surveillance by human complement system. In terms of assembly, (Microbial infection) Interacts with Staphylococcus aureus surface protein serine-aspartate repeat protein E/SdrE; this interaction sequesters CFH on the surface of S.aureus for complement evasion. (Microbial infection) Interacts with Staphylococcus aureus protein Sbi; this interaction inhibits the complement activation of the alternative pathway. As to quaternary structure, (Microbial infection) Interacts (via sushi 4-6 domains) with P.falciparum surface protein PF92; the interaction recruits CFH onto the merozoite surface preventing complement-mediated cell lysis. The interaction does not affect CFH activity. Interacts (via sushi 6-7 domains) with P.falciparum (strain NF54) GAP50; the interaction occurs in the vector mosquito midgut at the surface of the activated parasite gametocytes; the interaction protects the parasite from alternative complement pathway-mediated elimination. In terms of assembly, (Microbial infection) Interacts (via sushi 4-6 domains) with P.falciparum surface protein PF92; the interaction recruits FHL-1 isoform onto the merozoite surface preventing complement-mediated cell lysis. The interaction does not affect FHL-1 isoform activity. Interacts (via sushi 6-7 domains) with P.falciparum (strain NF54) GAP50; the interaction occurs in the vector mosquito midgut at the surface of the activated parasite gametocytes; the interaction protects the parasite from alternative complement pathway-mediated elimination. Sulfated on tyrosine residues. In terms of processing, according to a report, Asn-217 is not glycosylated. Another study observed glycosylation at this position. In terms of tissue distribution, expressed in the retinal pigment epithelium (at protein level). CFH is one of the most abundant complement components in blood where the liver is the major source of CFH protein in vivo. in addition, CFH is secreted by additional cell types including monocytes, fibroblasts, or endothelial cells.

The protein resides in the secreted. Its function is as follows. Glycoprotein that plays an essential role in maintaining a well-balanced immune response by modulating complement activation. Acts as a soluble inhibitor of complement, where its binding to self markers such as glycan structures prevents complement activation and amplification on cell surfaces. Accelerates the decay of the complement alternative pathway (AP) C3 convertase C3bBb, thus preventing local formation of more C3b, the central player of the complement amplification loop. As a cofactor of the serine protease factor I, CFH also regulates proteolytic degradation of already-deposited C3b. In addition, mediates several cellular responses through interaction with specific receptors. For example, interacts with CR3/ITGAM receptor and thereby mediates the adhesion of human neutrophils to different pathogens. In turn, these pathogens are phagocytosed and destroyed. Functionally, (Microbial infection) In the mosquito midgut, binds to the surface of parasite P.falciparum gametocytes and protects the parasite from alternative complement pathway-mediated elimination. The sequence is that of Complement factor H (CFH) from Homo sapiens (Human).